A 289-amino-acid chain; its full sequence is uncharacterized protein (289 aa).

A run of 10 helical transmembrane segments spans residues 7–27 (LLLALTMLIWAGSFIFIKIGL), 33–53 (FNLAFYRFLLASPLLMAWVFW), 65–85 (WLHLSVLALSGVTLLYAFQFL), 92–112 (ATNASILINTSAVFVALWGLV), 123–143 (GVFLSFAGVVLIVSKGTLEFF), 148–168 (IFGDVLMIVDGFLWAVYTVLG), 182–202 (AYAFALGTIFLIPFALMSGFA), 212–232 (VAALLYLSILCSVFAYVVWYY), 241–261 (SVAVYVYLVPLFTAIFAFYAL), and 265–285 (PDFFTAIGGIITIAGVYLTTA). 2 consecutive EamA domains span residues 14 to 136 (LIWA…LIVS) and 159 to 285 (FLWA…LTTA).

It belongs to the EamA transporter family.

The protein resides in the cell membrane. This is an uncharacterized protein from Archaeoglobus fulgidus (strain ATCC 49558 / DSM 4304 / JCM 9628 / NBRC 100126 / VC-16).